The sequence spans 68 residues: UPF0435 protein Sca_1453 (68 aa).

Belongs to the UPF0435 family.

The protein is UPF0435 protein Sca_1453 of Staphylococcus carnosus (strain TM300).